The primary structure comprises 617 residues: 1-deoxy-D-xylulose-5-phosphate synthase (617 aa).

Thiamine diphosphate contacts are provided by residues H77 and 118-120 (GHS). D149 is a binding site for Mg(2+). Thiamine diphosphate is bound by residues 150–151 (GA), N178, Y286, and E367. Residue N178 coordinates Mg(2+).

The protein belongs to the transketolase family. DXPS subfamily. As to quaternary structure, homodimer. Requires Mg(2+) as cofactor. The cofactor is thiamine diphosphate.

The catalysed reaction is D-glyceraldehyde 3-phosphate + pyruvate + H(+) = 1-deoxy-D-xylulose 5-phosphate + CO2. It functions in the pathway metabolic intermediate biosynthesis; 1-deoxy-D-xylulose 5-phosphate biosynthesis; 1-deoxy-D-xylulose 5-phosphate from D-glyceraldehyde 3-phosphate and pyruvate: step 1/1. Catalyzes the acyloin condensation reaction between C atoms 2 and 3 of pyruvate and glyceraldehyde 3-phosphate to yield 1-deoxy-D-xylulose-5-phosphate (DXP). The sequence is that of 1-deoxy-D-xylulose-5-phosphate synthase from Actinobacillus pleuropneumoniae serotype 5b (strain L20).